A 168-amino-acid polypeptide reads, in one-letter code: Transmembrane protein 229b (168 aa).

Residues 1–14 (MAPPEPLTALSRWY) are Cytoplasmic-facing. Residues 15 to 35 (LYAIHGYFCEVMFTAAWDFVV) traverse the membrane as a helical segment. Residues 36–40 (NYNWK) are Extracellular-facing. Residues 41 to 61 (FPGVTSVWALFIYGTSILIVE) form a helical membrane-spanning segment. Over 62–72 (KMYLYLKDKCN) the chain is Cytoplasmic. Residues 73 to 93 (ILIRCLIYTLWTYIWEFSTGL) form a helical membrane-spanning segment. The Extracellular segment spans residues 94–109 (ILRQFNACPWDYSQFD). Residues 110-130 (FDFMGLITLEYAIPWFCASFI) form a helical membrane-spanning segment. The Cytoplasmic portion of the chain corresponds to 131–168 (MEQLVIRNTLRLRFDEHAEPGSPVMSTVSMANGHVKCN).

It belongs to the TMEM229 family.

Its subcellular location is the membrane. This is Transmembrane protein 229b (tmem229b) from Xenopus tropicalis (Western clawed frog).